The chain runs to 157 residues: Protein Smg homolog (157 aa).

Belongs to the Smg family.

This Aliivibrio salmonicida (strain LFI1238) (Vibrio salmonicida (strain LFI1238)) protein is Protein Smg homolog.